The sequence spans 437 residues: Xylose isomerase (437 aa).

Residues H102 and D105 contribute to the active site. 7 residues coordinate Mg(2+): E233, E269, H272, D297, D308, D310, and D340.

The protein belongs to the xylose isomerase family. As to quaternary structure, homotetramer. The cofactor is Mg(2+).

The protein resides in the cytoplasm. The enzyme catalyses alpha-D-xylose = alpha-D-xylulofuranose. This Novosphingobium aromaticivorans (strain ATCC 700278 / DSM 12444 / CCUG 56034 / CIP 105152 / NBRC 16084 / F199) protein is Xylose isomerase.